Reading from the N-terminus, the 112-residue chain is ATP-dependent Clp protease adapter protein ClpS (112 aa).

Belongs to the ClpS family. In terms of assembly, binds to the N-terminal domain of the chaperone ClpA.

Its function is as follows. Involved in the modulation of the specificity of the ClpAP-mediated ATP-dependent protein degradation. This is ATP-dependent Clp protease adapter protein ClpS from Rhodococcus opacus (strain B4).